Reading from the N-terminus, the 148-residue chain is uncharacterized protein (148 aa).

Residues 1–20 form the signal peptide; that stretch reads MNLTKLLPAFAAAVVLSACA.

This is an uncharacterized protein from Haemophilus influenzae (strain ATCC 51907 / DSM 11121 / KW20 / Rd).